A 129-amino-acid chain; its full sequence is Sulfurtransferase TusD (129 aa).

Cys79 (cysteine persulfide intermediate) is an active-site residue.

Belongs to the DsrE/TusD family. Heterohexamer, formed by a dimer of trimers. The hexameric TusBCD complex contains 2 copies each of TusB, TusC and TusD. The TusBCD complex interacts with TusE.

Its subcellular location is the cytoplasm. Functionally, part of a sulfur-relay system required for 2-thiolation of 5-methylaminomethyl-2-thiouridine (mnm(5)s(2)U) at tRNA wobble positions. Accepts sulfur from TusA and transfers it in turn to TusE. This is Sulfurtransferase TusD from Serratia proteamaculans (strain 568).